We begin with the raw amino-acid sequence, 131 residues long: Small ribosomal subunit protein uS8 (131 aa).

This sequence belongs to the universal ribosomal protein uS8 family. In terms of assembly, part of the 30S ribosomal subunit. Contacts proteins S5 and S12.

One of the primary rRNA binding proteins, it binds directly to 16S rRNA central domain where it helps coordinate assembly of the platform of the 30S subunit. The chain is Small ribosomal subunit protein uS8 from Wolbachia pipientis subsp. Culex pipiens (strain wPip).